The primary structure comprises 202 residues: Sperm-specific H1/protamine-like protein type 1 (202 aa).

The segment covering methionine 1–arginine 35 has biased composition (basic residues). Disordered regions lie at residues methionine 1 to leucine 46 and lysine 104 to leucine 202. The H15 domain maps to lysine 41–lysine 120. Residues lysine 126–lysine 156 show a composition bias toward basic residues. Over residues glycine 177–tyrosine 187 the composition is skewed to low complexity.

OE1 and OE3 are produced by post-translational cleavage of a common precursor. As to expression, sperm.

The protein localises to the nucleus. It is found in the chromosome. In terms of biological role, linker histones are implicated in chromatin remodeling and/or transcriptional regulation during spermiogenesis, the process of spermatid maturation into spermatozoa. Protamines substitute for histones in the chromatin of sperm during the haploid phase of spermatogenesis. They compact sperm DNA into a highly condensed, stable and inactive complex. This chain is Sperm-specific H1/protamine-like protein type 1, found in Ostrea edulis (Native oyster).